We begin with the raw amino-acid sequence, 126 residues long: Small ribosomal subunit protein bS16 (126 aa).

Positions 87–126 are disordered; the sequence is ARSNPEKALPGKRALERVAEKKQKAEDAAAAAAAEASAAE. Residues 99–113 show a composition bias toward basic and acidic residues; that stretch reads RALERVAEKKQKAED. A compositionally biased stretch (low complexity) spans 114-126; that stretch reads AAAAAAAEASAAE.

This sequence belongs to the bacterial ribosomal protein bS16 family.

The protein is Small ribosomal subunit protein bS16 of Agrobacterium fabrum (strain C58 / ATCC 33970) (Agrobacterium tumefaciens (strain C58)).